A 469-amino-acid polypeptide reads, in one-letter code: Glutamate--tRNA ligase (469 aa).

The 'HIGH' region signature appears at 9–19 (PSPTGFLHVGG). Residues cysteine 98, cysteine 100, cysteine 125, and aspartate 127 each coordinate Zn(2+). A 'KMSKS' region motif is present at residues 236-240 (KLSKR). Lysine 239 lines the ATP pocket.

The protein belongs to the class-I aminoacyl-tRNA synthetase family. Glutamate--tRNA ligase type 1 subfamily. As to quaternary structure, monomer. Zn(2+) serves as cofactor.

Its subcellular location is the cytoplasm. It carries out the reaction tRNA(Glu) + L-glutamate + ATP = L-glutamyl-tRNA(Glu) + AMP + diphosphate. Its function is as follows. Catalyzes the attachment of glutamate to tRNA(Glu) in a two-step reaction: glutamate is first activated by ATP to form Glu-AMP and then transferred to the acceptor end of tRNA(Glu). The polypeptide is Glutamate--tRNA ligase (Shewanella sp. (strain W3-18-1)).